Consider the following 631-residue polypeptide: Phosphomethylpyrimidine synthase (631 aa).

Substrate is bound by residues Asn239, Met268, Tyr297, His333, 353-355 (SRG), 394-397 (DGLR), and Glu433. Residue His437 coordinates Zn(2+). Tyr460 is a binding site for substrate. His501 is a Zn(2+) binding site. [4Fe-4S] cluster contacts are provided by Cys581, Cys584, and Cys589.

It belongs to the ThiC family. In terms of assembly, homodimer. The cofactor is [4Fe-4S] cluster.

The catalysed reaction is 5-amino-1-(5-phospho-beta-D-ribosyl)imidazole + S-adenosyl-L-methionine = 4-amino-2-methyl-5-(phosphooxymethyl)pyrimidine + CO + 5'-deoxyadenosine + formate + L-methionine + 3 H(+). The protein operates within cofactor biosynthesis; thiamine diphosphate biosynthesis. Catalyzes the synthesis of the hydroxymethylpyrimidine phosphate (HMP-P) moiety of thiamine from aminoimidazole ribotide (AIR) in a radical S-adenosyl-L-methionine (SAM)-dependent reaction. In Escherichia coli O139:H28 (strain E24377A / ETEC), this protein is Phosphomethylpyrimidine synthase.